The sequence spans 240 residues: Proteasome subunit alpha (240 aa).

This sequence belongs to the peptidase T1A family. The 20S proteasome core is composed of 14 alpha and 14 beta subunits that assemble into four stacked heptameric rings, resulting in a barrel-shaped structure. The two inner rings, each composed of seven catalytic beta subunits, are sandwiched by two outer rings, each composed of seven alpha subunits. The catalytic chamber with the active sites is on the inside of the barrel. Has a gated structure, the ends of the cylinder being occluded by the N-termini of the alpha-subunits. Is capped at one or both ends by the proteasome regulatory ATPase, PAN.

It is found in the cytoplasm. The formation of the proteasomal ATPase PAN-20S proteasome complex, via the docking of the C-termini of PAN into the intersubunit pockets in the alpha-rings, triggers opening of the gate for substrate entry. Interconversion between the open-gate and close-gate conformations leads to a dynamic regulation of the 20S proteasome proteolysis activity. Its function is as follows. Component of the proteasome core, a large protease complex with broad specificity involved in protein degradation. The polypeptide is Proteasome subunit alpha (Methanoculleus marisnigri (strain ATCC 35101 / DSM 1498 / JR1)).